The chain runs to 510 residues: Putative thymidine phosphorylase (510 aa).

It belongs to the thymidine/pyrimidine-nucleoside phosphorylase family. Type 2 subfamily.

The catalysed reaction is thymidine + phosphate = 2-deoxy-alpha-D-ribose 1-phosphate + thymine. The protein is Putative thymidine phosphorylase of Nitrobacter hamburgensis (strain DSM 10229 / NCIMB 13809 / X14).